We begin with the raw amino-acid sequence, 541 residues long: CTP synthase (541 aa).

An amidoligase domain region spans residues 1–265 (MTRFIFITGG…DAVVCRHFGL (265 aa)). Ser-13 is a binding site for CTP. A UTP-binding site is contributed by Ser-13. An ATP-binding site is contributed by 14 to 19 (SLGKGL). Tyr-54 serves as a coordination point for L-glutamine. An ATP-binding site is contributed by Asp-71. Asp-71 and Glu-139 together coordinate Mg(2+). Residues 146–148 (DIE), 186–191 (KTKPTQ), and Lys-222 contribute to the CTP site. Residues 186 to 191 (KTKPTQ) and Lys-222 contribute to the UTP site. A Glutamine amidotransferase type-1 domain is found at 290-540 (TIAIVGKYIS…IAAAVRQSRL (251 aa)). Gly-352 serves as a coordination point for L-glutamine. Cys-379 serves as the catalytic Nucleophile; for glutamine hydrolysis. L-glutamine contacts are provided by residues 380–383 (FGMQ), Glu-403, and Arg-468. Catalysis depends on residues His-513 and Glu-515.

This sequence belongs to the CTP synthase family. Homotetramer.

It catalyses the reaction UTP + L-glutamine + ATP + H2O = CTP + L-glutamate + ADP + phosphate + 2 H(+). The catalysed reaction is L-glutamine + H2O = L-glutamate + NH4(+). It carries out the reaction UTP + NH4(+) + ATP = CTP + ADP + phosphate + 2 H(+). The protein operates within pyrimidine metabolism; CTP biosynthesis via de novo pathway; CTP from UDP: step 2/2. Its activity is regulated as follows. Allosterically activated by GTP, when glutamine is the substrate; GTP has no effect on the reaction when ammonia is the substrate. The allosteric effector GTP functions by stabilizing the protein conformation that binds the tetrahedral intermediate(s) formed during glutamine hydrolysis. Inhibited by the product CTP, via allosteric rather than competitive inhibition. In terms of biological role, catalyzes the ATP-dependent amination of UTP to CTP with either L-glutamine or ammonia as the source of nitrogen. Regulates intracellular CTP levels through interactions with the four ribonucleotide triphosphates. The chain is CTP synthase from Paramagnetospirillum magneticum (strain ATCC 700264 / AMB-1) (Magnetospirillum magneticum).